Consider the following 30-residue polypeptide: Cyclotide cter-F (30 aa).

Residues 1 to 30 (GIPCGESCVFIPCISSVVGCSCKSKVCYLD) constitute a cross-link (cyclopeptide (Gly-Asp)). Intrachain disulfides connect C4-C20, C8-C22, and C13-C27.

In terms of processing, contains 3 disulfide bonds. This is a cyclic peptide.

Functionally, probably participates in a plant defense mechanism. This is Cyclotide cter-F from Clitoria ternatea (Butterfly pea).